Here is a 34-residue protein sequence, read N- to C-terminus: Cytochrome b6-f complex subunit 7 (34 aa).

The chain crosses the membrane as a helical span at residues 9–29 (ALLSFGLIFVGWALGALLLKI).

It belongs to the PetM family. As to quaternary structure, the 4 large subunits of the cytochrome b6-f complex are cytochrome b6, subunit IV (17 kDa polypeptide, PetD), cytochrome f and the Rieske protein, while the 4 small subunits are PetG, PetL, PetM and PetN. The complex functions as a dimer.

Its subcellular location is the cellular thylakoid membrane. In terms of biological role, component of the cytochrome b6-f complex, which mediates electron transfer between photosystem II (PSII) and photosystem I (PSI), cyclic electron flow around PSI, and state transitions. This chain is Cytochrome b6-f complex subunit 7, found in Nostoc sp. (strain PCC 7120 / SAG 25.82 / UTEX 2576).